Consider the following 503-residue polypeptide: Lysine--tRNA ligase (503 aa).

Mg(2+) is bound by residues Glu414 and Glu421.

This sequence belongs to the class-II aminoacyl-tRNA synthetase family. In terms of assembly, homodimer. The cofactor is Mg(2+).

It is found in the cytoplasm. The catalysed reaction is tRNA(Lys) + L-lysine + ATP = L-lysyl-tRNA(Lys) + AMP + diphosphate. In Laribacter hongkongensis (strain HLHK9), this protein is Lysine--tRNA ligase.